The following is a 237-amino-acid chain: DCN1-like protein 5 (237 aa).

S41 carries the phosphoserine modification. One can recognise a DCUN1 domain in the interval 46–232 (FSRKKCLAWF…LLDEFVEWQK (187 aa)).

As to quaternary structure, part of a complex that contains DCUN1D5, CUL1 and RBX1; this interaction is bridged by CUL1. Interacts (via the DCUN1 domain) with the unneddylated cullins: interacts with CUL1, CUL2, CUL3, CUL4A, CUL4B and CUL5; these interactions promote the cullin neddylation and the identity of the cullin dictates the affinity of the interaction. Interacts (via DCUN1 domain) with UBE2M (N-terminally acetylated form) and probably with UBE2F (N-terminally acetylated form). May also interact with regulators or subunits of cullin-RING ligases such as RBX1, RNF7, ELOB and DDB1; these interactions are bridged by cullins. Interacts with CAND1; this interaction is bridged by cullins and strongly inhibits the neddylation of cullins. These CAND-cullin-DCNL complexes can only be neddylated in the presence of a substrate adapter. Post-translationally, phosphorylation at Ser-41 is independent of cullin's interaction. Phosphorylated in response to both TICAM1 and MYD88 dependent Toll-like receptor (TLR) pathway activation. Phosphorylated in response to IL1B stimulation.

It is found in the nucleus. It localises to the cytoplasm. The protein localises to the cytoskeleton. Its subcellular location is the spindle. Functionally, contributes to the neddylation of all cullins by transferring NEDD8 from N-terminally acetylated NEDD8-conjugating E2s enzyme to different cullin C-terminal domain-RBX complexes which is necessary for the activation of cullin-RING E3 ubiquitin ligases (CRLs). May play a role in DNA damage response and may participate in cell proliferation and anchorage-independent cell growth. The chain is DCN1-like protein 5 from Rattus norvegicus (Rat).